The primary structure comprises 115 residues: Large ribosomal subunit protein bL21 (115 aa).

It belongs to the bacterial ribosomal protein bL21 family. In terms of assembly, part of the 50S ribosomal subunit. Contacts protein L20.

Its function is as follows. This protein binds to 23S rRNA in the presence of protein L20. The sequence is that of Large ribosomal subunit protein bL21 from Picosynechococcus sp. (strain ATCC 27264 / PCC 7002 / PR-6) (Agmenellum quadruplicatum).